The primary structure comprises 275 residues: Putative Ig-like V-type domain-containing protein FPV055 (275 aa).

Ig-like V-type domains lie at 25 to 122 (KTFV…MNLG) and 140 to 239 (PRRS…KSLS).

The chain is Putative Ig-like V-type domain-containing protein FPV055 from Fowlpox virus (strain NVSL) (FPV).